We begin with the raw amino-acid sequence, 478 residues long: NADH-quinone oxidoreductase subunit N (478 aa).

Transmembrane regions (helical) follow at residues 8-28 (LVLP…FGVW), 38-58 (ILWA…LGTG), 62-82 (AFGG…VILV), 106-126 (PILI…GDLM), 160-180 (FVLG…VYGF), 200-220 (IGLL…VSAV), 234-254 (PTPV…ALIA), 268-288 (WGQI…IAGI), 300-320 (SSIS…AAGV), 322-342 (SMLL…AFIL), 368-388 (AFAL…LGFF), 398-418 (IGAG…IGAF), and 445-465 (FAFL…MAGV).

It belongs to the complex I subunit 2 family. NDH-1 is composed of 14 different subunits. Subunits NuoA, H, J, K, L, M, N constitute the membrane sector of the complex.

The protein localises to the cellular chromatophore membrane. The catalysed reaction is a quinone + NADH + 5 H(+)(in) = a quinol + NAD(+) + 4 H(+)(out). Its function is as follows. NDH-1 shuttles electrons from NADH, via FMN and iron-sulfur (Fe-S) centers, to quinones in the respiratory chain. The immediate electron acceptor for the enzyme in this species is believed to be ubiquinone. Couples the redox reaction to proton translocation (for every two electrons transferred, four hydrogen ions are translocated across the cytoplasmic membrane), and thus conserves the redox energy in a proton gradient. This Rhodobacter capsulatus (Rhodopseudomonas capsulata) protein is NADH-quinone oxidoreductase subunit N.